The following is a 591-amino-acid chain: Pentatricopeptide repeat-containing protein At3g47530 (591 aa).

9 PPR repeats span residues 76 to 110 (TLSH…SSLP), 112 to 146 (NPLS…GFLS), 147 to 177 (DSLL…IPKR), 178 to 208 (DTVS…MKND), 216 to 250 (DGVT…GLSG), 251 to 281 (ALNL…MRER), 282 to 316 (NVVS…GISP), 317 to 351 (EEQT…EFKI), and 354 to 384 (NLHH…MEMK). The tract at residues 389 to 464 (IWRTLLGACR…KPGCSAIELQ (76 aa)) is type E motif. The segment at 465-495 (GTVHEFIVDDVSHPRKEEIYKMLAEINQQLK) is type E(+) motif. The type DYW motif stretch occupies residues 496-591 (IAGYVAEITS…GGSCSCNDFW (96 aa)).

This sequence belongs to the PPR family. PCMP-H subfamily.

This is Pentatricopeptide repeat-containing protein At3g47530 (PCMP-H76) from Arabidopsis thaliana (Mouse-ear cress).